An 89-amino-acid chain; its full sequence is Small ribosomal subunit protein uS15 (89 aa).

Basic and acidic residues predominate over residues 1–16 (MSVADIKKQDIVKDNG). Residues 1-24 (MSVADIKKQDIVKDNGRSANDTGS) form a disordered region.

It belongs to the universal ribosomal protein uS15 family. Part of the 30S ribosomal subunit. Forms a bridge to the 50S subunit in the 70S ribosome, contacting the 23S rRNA.

In terms of biological role, one of the primary rRNA binding proteins, it binds directly to 16S rRNA where it helps nucleate assembly of the platform of the 30S subunit by binding and bridging several RNA helices of the 16S rRNA. Its function is as follows. Forms an intersubunit bridge (bridge B4) with the 23S rRNA of the 50S subunit in the ribosome. This Ralstonia pickettii (strain 12J) protein is Small ribosomal subunit protein uS15.